The sequence spans 545 residues: 4-coumarate--CoA ligase 1 (545 aa).

Residues S192, S193, G194, T195, T196, and K200 each coordinate ATP. Y242 and S246 together coordinate (E)-4-coumaroyl-AMP. A CoA-binding site is contributed by K263. Residues 265 to 334 (DIAQFLELIP…AKFPNAKLGQ (70 aa)) form an SBD1 region. (E)-4-coumaroyl-AMP is bound by residues A312, Q334, G335, T339, and M347. ATP is bound by residues Q334, G335, and T339. Residues 335–402 (GYGMTEAGPV…IRGDQIMKGY (68 aa)) are SBD2. The ATP site is built by D423 and R438. The (E)-4-coumaroyl-AMP site is built by K440 and K444. Positions 446 and 447 each coordinate CoA. K529 contacts ATP.

It belongs to the ATP-dependent AMP-binding enzyme family. Mg(2+) serves as cofactor.

It catalyses the reaction (E)-4-coumarate + ATP + CoA = (E)-4-coumaroyl-CoA + AMP + diphosphate. The enzyme catalyses (E)-4-coumarate + ATP + H(+) = (E)-4-coumaroyl-AMP + diphosphate. It carries out the reaction (E)-4-coumaroyl-AMP + CoA = (E)-4-coumaroyl-CoA + AMP + H(+). Its pathway is phytoalexin biosynthesis; 3,4',5-trihydroxystilbene biosynthesis; 3,4',5-trihydroxystilbene from trans-4-coumarate: step 1/2. Its function is as follows. Carboxylate--CoA ligase that may use 4-coumarate as substrate. Follows a two-step reaction mechanism, wherein the carboxylate substrate first undergoes adenylation by ATP, followed by a thioesterification in the presence of CoA to yield the final CoA thioester. The sequence is that of 4-coumarate--CoA ligase 1 (4CL1) from Solanum tuberosum (Potato).